A 260-amino-acid polypeptide reads, in one-letter code: Diphthine synthase (260 aa).

Residues leucine 9, aspartate 85, isoleucine 88, 113–114 (TA), leucine 168, alanine 208, and histidine 233 contribute to the S-adenosyl-L-methionine site.

It belongs to the diphthine synthase family. As to quaternary structure, homodimer.

It carries out the reaction 2-[(3S)-amino-3-carboxypropyl]-L-histidyl-[translation elongation factor 2] + 3 S-adenosyl-L-methionine = diphthine-[translation elongation factor 2] + 3 S-adenosyl-L-homocysteine + 3 H(+). The protein operates within protein modification; peptidyl-diphthamide biosynthesis. S-adenosyl-L-methionine-dependent methyltransferase that catalyzes the trimethylation of the amino group of the modified target histidine residue in translation elongation factor 2 (EF-2), to form an intermediate called diphthine. The three successive methylation reactions represent the second step of diphthamide biosynthesis. The polypeptide is Diphthine synthase (Halobacterium salinarum (strain ATCC 29341 / DSM 671 / R1)).